The sequence spans 200 residues: dITP/XTP pyrophosphatase (200 aa).

8-13 (TGNQGK) lines the substrate pocket. The active-site Proton acceptor is the aspartate 69. Aspartate 69 lines the Mg(2+) pocket. Substrate contacts are provided by residues serine 70, 154–157 (FGYD), lysine 177, and 182–183 (HR).

It belongs to the HAM1 NTPase family. In terms of assembly, homodimer. Mg(2+) serves as cofactor.

The catalysed reaction is XTP + H2O = XMP + diphosphate + H(+). It carries out the reaction dITP + H2O = dIMP + diphosphate + H(+). The enzyme catalyses ITP + H2O = IMP + diphosphate + H(+). In terms of biological role, pyrophosphatase that catalyzes the hydrolysis of nucleoside triphosphates to their monophosphate derivatives, with a high preference for the non-canonical purine nucleotides XTP (xanthosine triphosphate), dITP (deoxyinosine triphosphate) and ITP. Seems to function as a house-cleaning enzyme that removes non-canonical purine nucleotides from the nucleotide pool, thus preventing their incorporation into DNA/RNA and avoiding chromosomal lesions. The protein is dITP/XTP pyrophosphatase of Vibrio parahaemolyticus serotype O3:K6 (strain RIMD 2210633).